Here is a 504-residue protein sequence, read N- to C-terminus: Sodium/proline symporter (504 aa).

Helical transmembrane passes span 8–28 (LITFTIYIFGMLLIGVLAYYY), 50–70 (SAGASDMSGWLLMGLPGAVYL), 73–93 (LVEGWIAIGLTIGAYFNWLLV), 127–147 (LVSATIILVFLTIYCASGVVA), 163–183 (ALWYGAAATIAYTFIGGFLAV), 189–209 (IQATLMIFALILTPVFVLLSF), 240–260 (LGLLSLAAWGLGYFGQPHILA), 281–301 (WMVLCLAGAIGIGLFAIPYFF), 324–344 (LLFNPWIAGILLSAILAAVMS), 374–394 (ELVWLGRIMVLVIAALAIWIA), 405–425 (VEFAWAGFGSAFGPVVLFSLF), 434–454 (AMAGMLVGAVTVFAWKEVVPA), and 461–481 (VYEMIPGFAFASLAIIVISLL).

The protein belongs to the sodium:solute symporter (SSF) (TC 2.A.21) family.

The protein localises to the cell inner membrane. The catalysed reaction is L-proline(in) + Na(+)(in) = L-proline(out) + Na(+)(out). Functionally, catalyzes the sodium-dependent uptake of extracellular L-proline. The chain is Sodium/proline symporter (putP) from Haemophilus influenzae (strain ATCC 51907 / DSM 11121 / KW20 / Rd).